Reading from the N-terminus, the 393-residue chain is Dwarfin sma-3 (393 aa).

In terms of domain architecture, MH1 spans 10-139; the sequence is PAVKKLLGWK…YQRLSRPQGL (130 aa). Residues Cys65, Cys110, Cys124, and His129 each contribute to the Zn(2+) site. The segment at 136–190 is disordered; the sequence is PQGLNSSMPSPQPISSPNTIWQSSGSSTASCASSPSPSVFSEDGGEVQVHQRPPP. The segment covering 141-176 has biased composition (low complexity); it reads SSMPSPQPISSPNTIWQSSGSSTASCASSPSPSVFS. The MH2 domain maps to 197-393; the sequence is WAQITYFELN…TNLMEPNSMT (197 aa).

Belongs to the dwarfin/SMAD family.

It localises to the cytoplasm. It is found in the nucleus. Involved in TGF-beta pathway. Plays a role in male tail tip morphogenesis. This Caenorhabditis elegans protein is Dwarfin sma-3.